The sequence spans 379 residues: UDP-4-amino-4-deoxy-L-arabinose--oxoglutarate aminotransferase (379 aa).

An N6-(pyridoxal phosphate)lysine modification is found at Lys182.

This sequence belongs to the DegT/DnrJ/EryC1 family. ArnB subfamily. As to quaternary structure, homodimer. The cofactor is pyridoxal 5'-phosphate.

The catalysed reaction is UDP-4-amino-4-deoxy-beta-L-arabinose + 2-oxoglutarate = UDP-beta-L-threo-pentopyranos-4-ulose + L-glutamate. It functions in the pathway nucleotide-sugar biosynthesis; UDP-4-deoxy-4-formamido-beta-L-arabinose biosynthesis; UDP-4-deoxy-4-formamido-beta-L-arabinose from UDP-alpha-D-glucuronate: step 2/3. The protein operates within bacterial outer membrane biogenesis; lipopolysaccharide biosynthesis. In terms of biological role, catalyzes the conversion of UDP-4-keto-arabinose (UDP-Ara4O) to UDP-4-amino-4-deoxy-L-arabinose (UDP-L-Ara4N). The modified arabinose is attached to lipid A and is required for resistance to polymyxin and cationic antimicrobial peptides. This is UDP-4-amino-4-deoxy-L-arabinose--oxoglutarate aminotransferase from Salmonella schwarzengrund (strain CVM19633).